The following is a 397-amino-acid chain: Elongation factor Tu (397 aa).

Residues 10 to 206 (KPHVNIGTIG…HIDTYIPEPT (197 aa)) form the tr-type G domain. The G1 stretch occupies residues 19-26 (GHVDHGKT). Position 19-26 (19-26 (GHVDHGKT)) interacts with GTP. Residue Thr26 participates in Mg(2+) binding. The interval 61–65 (GITIS) is G2. The segment at 82–85 (DCPG) is G3. Residues 82–86 (DCPGH) and 137–140 (NKCD) each bind GTP. Residues 137–140 (NKCD) are G4. The G5 stretch occupies residues 175–177 (SAL).

This sequence belongs to the TRAFAC class translation factor GTPase superfamily. Classic translation factor GTPase family. EF-Tu/EF-1A subfamily. In terms of assembly, monomer.

It is found in the cytoplasm. The catalysed reaction is GTP + H2O = GDP + phosphate + H(+). GTP hydrolase that promotes the GTP-dependent binding of aminoacyl-tRNA to the A-site of ribosomes during protein biosynthesis. In Alkaliphilus oremlandii (strain OhILAs) (Clostridium oremlandii (strain OhILAs)), this protein is Elongation factor Tu.